A 149-amino-acid chain; its full sequence is Altered inheritance of mitochondria protein 11 (149 aa).

The next 2 helical transmembrane spans lie at 29 to 48 (MMRF…LAIT) and 79 to 101 (LVLA…CWIW).

The protein belongs to the AIM11 family.

The protein resides in the membrane. The sequence is that of Altered inheritance of mitochondria protein 11 (AIM11) from Vanderwaltozyma polyspora (strain ATCC 22028 / DSM 70294 / BCRC 21397 / CBS 2163 / NBRC 10782 / NRRL Y-8283 / UCD 57-17) (Kluyveromyces polysporus).